Reading from the N-terminus, the 360-residue chain is SVP1-like protein 2 (360 aa).

3 WD repeats span residues 12–50, 191–231, and 236–275; these read AHEPAVLNAAFNQDQTCFAVCHESGFQVYNTDPMELRMK, AHKS…LRFE, and LDRATVTSIKFSPDDSKLAVLSDKNTLHVYNLTAADPQPE.

This sequence belongs to the WD repeat PROPPIN family.

The protein localises to the vacuole membrane. Its subcellular location is the cytoplasmic vesicle membrane. In terms of biological role, involved in mitochondrial or peroxisomal functions and amino acid signaling pathways. The chain is SVP1-like protein 2 (HSV2) from Pichia angusta (Yeast).